The following is a 342-amino-acid chain: P2Y purinoceptor 12 (342 aa).

The Extracellular segment spans residues 1 to 27 (MQAVDNLTSAPGNTSLCTRDYKITQVL). Asn6 and Asn13 each carry an N-linked (GlcNAc...) asparagine glycan. 2 cysteine pairs are disulfide-bonded: Cys17–Cys270 and Cys97–Cys175. Residues 28–50 (FPLLYTVLFFVGLITNGLAMRIF) form a helical membrane-spanning segment. The Cytoplasmic segment spans residues 51–61 (FQIRSKSNFII). Ser55 and Ser57 each carry phosphoserine. A helical transmembrane segment spans residues 62–82 (FLKNTVISDLLMILTFPFKIL). The Extracellular segment spans residues 83–97 (SDAKLGTGPLRTFVC). Residues Arg93, Cys97, and Tyr105 each coordinate ADP. Residues 98–118 (QVTSVIFYFTMYISISFLGLI) form a helical membrane-spanning segment. At 119–142 (TIDRYQKTTRPFKTSNPKNLLGAK) the chain is on the cytoplasmic side. The helical transmembrane segment at 143-162 (ILSVVIWAFMFLLSLPNMIL) threads the bilayer. ADP-binding positions include 156–159 (SLPN), 175–179 (CSFLK), His187, and Asn191. At 163–185 (TNRQPRDKNVKKCSFLKSEFGLV) the chain is on the extracellular side. Residues 186 to 207 (WHEIVNYICQVIFWINFLIVIV) traverse the membrane as a helical segment. At 208–233 (CYTLITKELYRSYVRTRGVGKVPRKK) the chain is on the cytoplasmic side. The chain crosses the membrane as a helical span at residues 234-259 (VNVKVFIIIAVFFICFVPFHFARIPY). Residues 256 to 259 (RIPY), Gln263, and Lys280 contribute to the ADP site. Over 260 to 278 (TLSQTRDVFDCTAENTLFY) the chain is Extracellular. The helical transmembrane segment at 279–298 (VKESTLWLTSLNACLDPFIY) threads the bilayer. The Cytoplasmic portion of the chain corresponds to 299–342 (FFLCKSFRNSLISMLKCPNSATSLSQDNRKKEQDGGDPNEETPM). The segment at 319 to 342 (ATSLSQDNRKKEQDGGDPNEETPM) is disordered. Residues 333-342 (GGDPNEETPM) are compositionally biased toward acidic residues.

It belongs to the G-protein coupled receptor 1 family. Highly expressed in the platelets, lower levels in the brain. Lowest levels in the lung, appendix, pituitary and adrenal gland. Expressed in the spinal cord and in the fetal brain.

It is found in the cell membrane. Receptor for ADP and ATP coupled to G-proteins that inhibit the adenylyl cyclase second messenger system. Not activated by UDP and UTP. Required for normal platelet aggregation and blood coagulation. In Homo sapiens (Human), this protein is P2Y purinoceptor 12 (P2RY12).